The following is a 617-amino-acid chain: Dihydroxy-acid dehydratase (617 aa).

Position 81 (Asp81) interacts with Mg(2+). Cys122 provides a ligand contact to [2Fe-2S] cluster. Residues Asp123 and Lys124 each contribute to the Mg(2+) site. At Lys124 the chain carries N6-carboxylysine. Cys197 is a [2Fe-2S] cluster binding site. Residue Glu493 participates in Mg(2+) binding. Ser519 serves as the catalytic Proton acceptor.

Belongs to the IlvD/Edd family. In terms of assembly, homodimer. [2Fe-2S] cluster is required as a cofactor. Mg(2+) serves as cofactor.

The catalysed reaction is (2R)-2,3-dihydroxy-3-methylbutanoate = 3-methyl-2-oxobutanoate + H2O. It catalyses the reaction (2R,3R)-2,3-dihydroxy-3-methylpentanoate = (S)-3-methyl-2-oxopentanoate + H2O. It participates in amino-acid biosynthesis; L-isoleucine biosynthesis; L-isoleucine from 2-oxobutanoate: step 3/4. Its pathway is amino-acid biosynthesis; L-valine biosynthesis; L-valine from pyruvate: step 3/4. Functionally, functions in the biosynthesis of branched-chain amino acids. Catalyzes the dehydration of (2R,3R)-2,3-dihydroxy-3-methylpentanoate (2,3-dihydroxy-3-methylvalerate) into 2-oxo-3-methylpentanoate (2-oxo-3-methylvalerate) and of (2R)-2,3-dihydroxy-3-methylbutanoate (2,3-dihydroxyisovalerate) into 2-oxo-3-methylbutanoate (2-oxoisovalerate), the penultimate precursor to L-isoleucine and L-valine, respectively. This is Dihydroxy-acid dehydratase from Corynebacterium aurimucosum (strain ATCC 700975 / DSM 44827 / CIP 107346 / CN-1) (Corynebacterium nigricans).